We begin with the raw amino-acid sequence, 199 residues long: Desiccation stress protein DSP-22, chloroplastic (199 aa).

The transit peptide at 1 to 52 directs the protein to the chloroplast; that stretch reads MASSTCYATIPAMSCRGQSTITRFGPNNLFLGKQSYELPLMRRNAKFTVRSM. Residues 53–62 are compositionally biased toward basic and acidic residues; that stretch reads REDNEKEEQQ. The segment at 53-82 is disordered; sequence REDNEKEEQQQQKQQQTHDGGPDLTPNRTE. Helical transmembrane passes span 130–152 and 172–191; these read FNGGVMWFLLTSAVLVLATLIPI and IWNGRFAMIGLVALAFTEYV.

The protein belongs to the ELIP/psbS family. As to expression, preferentially localized in the chloroplast-rich palisade parenchyma cells, in extracts of desiccated leaves, in seeds, but not in roots or untreated leaves.

It is found in the plastid. Its subcellular location is the chloroplast thylakoid membrane. Functionally, possibly exerts a protective role during water loss. The sequence is that of Desiccation stress protein DSP-22, chloroplastic (DSP-22) from Craterostigma plantagineum (Blue gem).